We begin with the raw amino-acid sequence, 1366 residues long: Collagen alpha-2(I) chain (1366 aa).

The signal sequence occupies residues 1-22 (MLSFVDTRTLLLLAVTSCLATC). At Q23 the chain carries Pyrrolidone carboxylic acid. A propeptide spans 23 to 79 (QSLQEATARKGPTGDRGPRGERGPPGPPGRDGDDGIPGPPGPPGPPGPPGLGGNFAA) (N-terminal propeptide). The interval 27-1131 (EATARKGPTG…PRSPPSLRPK (1105 aa)) is disordered. Basic and acidic residues predominate over residues 34–44 (PTGDRGPRGER). A compositionally biased stretch (pro residues) spans 59-71 (PGPPGPPGPPGPP). Position 84 is an allysine (K84). Over residues 84–94 (KGVGLGPGPMG) the composition is skewed to gly residues. Residues 95 to 132 (LMGPRGPPGASGAPGPQGFQGPAGEPGEPGQTGPAGAR) show a composition bias toward low complexity. Residues 141–155 (AGEDGHPGKPGRPGE) are compositionally biased toward basic and acidic residues. K177 is subject to 5-hydroxylysine; alternate. O-linked (Gal...) hydroxylysine; alternate glycosylation is present at K177. 8 stretches are compositionally biased toward low complexity: residues 225 to 254 (VGAP…SAGP), 279 to 293 (AGPR…VSGP), 300 to 321 (PGAN…AGAP), 330 to 345 (PGPV…RGIV), 384 to 408 (NGEA…RGLP), 423 to 434 (RGATGPAGVRGP), 470 to 489 (LPGI…RGEP), and 513 to 531 (AGLA…NGAQ). Positions 538-547 (GVQGGKGEQG) are enriched in gly residues. The span at 594 to 611 (PGESGAAGPSGPIGSRGP) shows a compositional bias: low complexity. Over residues 634–643 (GASGPGGLPG) the composition is skewed to gly residues. Composition is skewed to low complexity over residues 668 to 690 (NPGR…AGAT) and 717 to 737 (VGPA…QPGA). Residues 738 to 747 (KGERGTKGPK) are compositionally biased toward basic and acidic residues. The span at 756–765 (TGPIGSAGPS) shows a compositional bias: low complexity. A compositionally biased stretch (gly residues) spans 775–784 (GSRGDGGPPG). Composition is skewed to low complexity over residues 785 to 795 (ATGFPGAAGRT), 863 to 876 (PQGL…LGLP), 893 to 932 (EPGP…NPGN), 951 to 974 (PGNI…PTGK), and 981 to 1001 (PGPA…PSGP). Residues 1005–1016 (RGDKGEPGEKGP) show a composition bias toward basic and acidic residues. Over residues 1089-1103 (AGPPGPPGPPGPPGP) the composition is skewed to pro residues. Positions 1120-1366 (DQPRSPPSLR…RVDVGPVCFK (247 aa)) are cleaved as a propeptide — C-terminal propeptide. The region spanning 1133-1366 (YEVDATLKSL…RVDVGPVCFK (234 aa)) is the Fibrillar collagen NC1 domain. Disulfide bonds link C1163–C1195, C1203–C1364, and C1272–C1317. Ca(2+) contacts are provided by D1181, N1183, Q1184, C1186, and D1189.

Belongs to the fibrillar collagen family. As to quaternary structure, trimers of one alpha 2(I) and two alpha 1(I) chains. Interacts (via C-terminus) with TMEM131 (via PapD-L domain); the interaction is direct and is involved in assembly and TRAPPIII ER-to-Golgi transport complex-dependent secretion of collagen. Prolines at the third position of the tripeptide repeating unit (G-X-Y) are hydroxylated in some or all of the chains. Forms the fibrils of tendon, ligaments and bones. In bones the fibrils are mineralized with calcium hydroxyapatite.

It localises to the secreted. The protein resides in the extracellular space. The protein localises to the extracellular matrix. Functionally, type I collagen is a member of group I collagen (fibrillar forming collagen). This chain is Collagen alpha-2(I) chain (COL1A2), found in Canis lupus familiaris (Dog).